The chain runs to 365 residues: Keratin-associated protein 10-6 (365 aa).

A run of 29 repeats spans residues 41 to 45 (CCEPP), 46 to 50 (CCAPA), 67 to 71 (CCPVT), 89 to 93 (CCQQS), 99 to 103 (CCASS), 109 to 113 (CCVPV), 114 to 118 (CCKTV), 119 to 123 (CCKPV), 124 to 128 (CCVSV), 129 to 133 (CCGDS), 135 to 139 (CCQQS), 145 to 149 (CCTSS), 155 to 159 (CCVPV), 160 to 164 (CCKPV), 172 to 176 (CCQQS), 186 to 190 (CCQAV), 208 to 212 (CCQQS), 218 to 222 (CCTSS), 228 to 232 (CCVPV), 233 to 237 (CCVPV), 238 to 242 (CCVPT), 250 to 254 (CCQQS), 260 to 264 (CCTSS), 270 to 274 (CCVPV), 282 to 286 (CCQQS), 292 to 296 (CCTAS), 297 to 301 (CCRSS), 316 to 320 (CCVPV), and 334 to 338 (CCRTA). Residues 41–338 (CCEPPCCAPA…SCQPSCCRTA (298 aa)) are 29 X 5 AA repeats of C-C-X(3).

It belongs to the KRTAP type 10 family. As to quaternary structure, interacts with hair keratins. In terms of tissue distribution, restricted to a narrow region of the hair fiber cuticle, lying approximately 20 cell layers above the apex of the dermal papilla of the hair root; not detected in any other tissues.

Functionally, in the hair cortex, hair keratin intermediate filaments are embedded in an interfilamentous matrix, consisting of hair keratin-associated proteins (KRTAP), which are essential for the formation of a rigid and resistant hair shaft through their extensive disulfide bond cross-linking with abundant cysteine residues of hair keratins. The matrix proteins include the high-sulfur and high-glycine-tyrosine keratins. The polypeptide is Keratin-associated protein 10-6 (KRTAP10-6) (Homo sapiens (Human)).